Consider the following 97-residue polypeptide: Citrate lyase acyl carrier protein (97 aa).

S14 bears the O-(phosphoribosyl dephospho-coenzyme A)serine mark.

The protein belongs to the CitD family. In terms of assembly, oligomer with a subunit composition of (alpha,beta,gamma)6.

The protein resides in the cytoplasm. In terms of biological role, covalent carrier of the coenzyme of citrate lyase. This is Citrate lyase acyl carrier protein from Lactobacillus helveticus (strain DPC 4571).